Reading from the N-terminus, the 663-residue chain is DNA topoisomerase 4 subunit B (663 aa).

ATP is bound by residues Tyr-7, Asn-47, Asp-74, 114 to 120 (GLHGVGA), and Lys-341. Positions 386-416 (REAARKAREDARSGKKNKRKDTLLSGKLTPA) are disordered. The segment covering 387 to 398 (EAARKAREDARS) has biased composition (basic and acidic residues). The 115-residue stretch at 424-538 (NELYLVEGDS…ADRVFIALPP (115 aa)) folds into the Toprim domain. 3 residues coordinate Mg(2+): Glu-430, Asp-503, and Asp-505.

Belongs to the type II topoisomerase family. ParE type 2 subfamily. As to quaternary structure, heterotetramer composed of ParC and ParE. The cofactor is Mg(2+). Mn(2+) serves as cofactor. Requires Ca(2+) as cofactor.

It catalyses the reaction ATP-dependent breakage, passage and rejoining of double-stranded DNA.. Functionally, topoisomerase IV is essential for chromosome segregation. It relaxes supercoiled DNA. Performs the decatenation events required during the replication of a circular DNA molecule. The sequence is that of DNA topoisomerase 4 subunit B from Staphylococcus aureus (strain MSSA476).